Consider the following 554-residue polypeptide: Thermosome subunit alpha (554 aa).

The disordered stretch occupies residues 530-554 (PKKKEKKGKTGEEEEEEGGGSKFEF).

Belongs to the TCP-1 chaperonin family. In terms of assembly, forms a Heterooligomeric complex of two stacked eight-membered rings.

Functionally, molecular chaperone; binds unfolded polypeptides in vitro, and has a weak ATPase activity. The protein is Thermosome subunit alpha (thsA) of Aeropyrum pernix (strain ATCC 700893 / DSM 11879 / JCM 9820 / NBRC 100138 / K1).